The following is a 386-amino-acid chain: FHA domain-containing protein At4g14490 (386 aa).

One can recognise an FHA domain in the interval 28–78; it reads IRVGRIVRGNEIAIKDAGISTKHLRIESDSGNWVIQDLGSSNGTLLNSNAL. Residues 286–311 are disordered; the sequence is KNKGKNKKADQKPLKSFENDEVTDSG. A compositionally biased stretch (basic and acidic residues) spans 292 to 303; it reads KKADQKPLKSFE.

The chain is FHA domain-containing protein At4g14490 from Arabidopsis thaliana (Mouse-ear cress).